The following is a 128-amino-acid chain: Large ribosomal subunit protein bL12 (128 aa).

The protein belongs to the bacterial ribosomal protein bL12 family. Homodimer. Part of the ribosomal stalk of the 50S ribosomal subunit. Forms a multimeric L10(L12)X complex, where L10 forms an elongated spine to which 2 to 4 L12 dimers bind in a sequential fashion. Binds GTP-bound translation factors.

In terms of biological role, forms part of the ribosomal stalk which helps the ribosome interact with GTP-bound translation factors. Is thus essential for accurate translation. The protein is Large ribosomal subunit protein bL12 of Desulfosudis oleivorans (strain DSM 6200 / JCM 39069 / Hxd3) (Desulfococcus oleovorans).